The sequence spans 354 residues: Homeobox protein Nkx-2.4 (354 aa).

The segment at residues 189–248 (RRKRRVLFSQAQVYELERRFKQQKYLSAPEREHLASMIHLTPTQVKIWFQNHRYKMKRQA) is a DNA-binding region (homeobox). The segment at 246 to 329 (RQAKDKAAQQ…PALHGPGGGL (84 aa)) is disordered. Over residues 263-272 (GPPPPPPPSP) the composition is skewed to pro residues.

This sequence belongs to the NK-2 homeobox family.

The protein resides in the nucleus. Probable transcription factor. The sequence is that of Homeobox protein Nkx-2.4 (NKX2-4) from Homo sapiens (Human).